We begin with the raw amino-acid sequence, 347 residues long: MFPIFDPVALGLYIVGYIFMLIIAATIAPKVAKSISGRFTLYGAMALTAVLVVLTTAFIIYLFVTVALPHMGAYGLSFLLGLIFFVVLMNIITYFASPYLINLSYGARPDPRLQQIVDEVAARLGAPFKLKAVVVDGPPNAFAYGNFLTGRYVAVTSSMLALTDRRELEAVIGHEIGHHLHRDNAIMLLFGILPSIVYYLGVTAVHMAMASSGNRGGNPAILAAVGIAAVIVSFLIQLLVLAFSRLREYYADTAGAKAAGKEAMQFALAKIHKFYFANPEAHEVVRDSKFRALFIYALVNAVANPFVSVTRSDLEEIKRSSYSVFQEIFSTHPPIPKRLKFLDELQF.

The next 4 membrane-spanning stretches (helical) occupy residues 8–28 (VALG…ATIA), 44–64 (AMAL…YLFV), 76–96 (LSFL…TYFA), and 141–163 (AFAY…LALT). H174 lines the Zn(2+) pocket. E175 is a catalytic residue. Residue H178 coordinates Zn(2+). 2 helical membrane passes run 185 to 205 (AIML…VTAV) and 221 to 241 (ILAA…LLVL). E248 contributes to the Zn(2+) binding site.

Belongs to the peptidase M48B family. It depends on Zn(2+) as a cofactor.

It is found in the cell membrane. This Pyrobaculum aerophilum (strain ATCC 51768 / DSM 7523 / JCM 9630 / CIP 104966 / NBRC 100827 / IM2) protein is Protease HtpX homolog.